A 510-amino-acid polypeptide reads, in one-letter code: Cytochrome P450 52C2 (510 aa).

Residue C458 participates in heme binding.

The protein belongs to the cytochrome P450 family. Heme is required as a cofactor.

Its subcellular location is the membrane. Its function is as follows. Together with an NADPH cytochrome P450 the enzyme system catalyzes the terminal hydroxylation as the first step in the assimilation of alkanes and fatty acids. The chain is Cytochrome P450 52C2 (CYP52C2) from Candida maltosa (Yeast).